Reading from the N-terminus, the 1023-residue chain is NRPS-like oxidoreductase fscA (1023 aa).

The interval 54 to 454 is adenylation; sequence TYGDLNGMAT…NHPFVRQCMV (401 aa). The Carrier domain maps to 554 to 637; it reads PEDDVIGRQI…SIANHVRSAQ (84 aa). At Ser596 the chain carries O-(pantetheine 4'-phosphoryl)serine. One can recognise a Thioester reductase (TE) domain in the interval 685-901; the sequence is LTGGAGYLGQ…VYDESTTRAR (217 aa).

This sequence belongs to the NRP synthetase family. Pantetheine 4'-phosphate serves as cofactor.

Its pathway is secondary metabolite biosynthesis. In terms of biological role, NRPS-like oxidoreductasee; part of the fragmented gene cluster that mediates the biosynthesis of fusarochromene, a tryptophan-derived metabolite closely related to a group of mycotoxins including fusarochromanone. Within the pathway, fscA acts as an oxidoreductase that reduces the carboxyl group of 4-hydroxykyrunenine to primary alcohol. The first step of the pathway is the epimerization of L-tryptophan to D-tryptophan in the presence of the NRPS-like tryptophan epimerase fscC. D-tryptophan is subsequently hydroxylated by the tryptophan 6-hydroxylase fscE to yield 6-hydroxytryptophan. The pyrrole ring undergoes cleavaged by the tryptophan 2,3-dioxygenase fscD and is finally converted to 4-hydroxykyrunenine by the hydrolase fscH. The NRPS-like oxidoreductase fscA reduces the carboxyl group to primary alcohol and the DMATS-type prenyltransferase fscG performs prenylation, followed by the formation of a chromene ring catalyzed by the oxidoreductase fscI, which leads to desacetylfusarochromene. Epoxidation by fscF and rearrangement reactions of chromene double bonds convert compound desacetylfusarochromene to fusarochromanones. Although specific acetyltransferases were not found near the fsc gene cluster, several predicted enzymes containing the N-acetyltransferase superfamily domain are present in the genome of F.equiseti. These predicted enzymes may have the potential to convert desacetylfusarochromene to fusarochromene. This is NRPS-like oxidoreductase fscA from Fusarium equiseti (Fusarium scirpi).